The following is a 216-amino-acid chain: V-type ATP synthase subunit D (216 aa).

This sequence belongs to the V-ATPase D subunit family.

Its function is as follows. Produces ATP from ADP in the presence of a proton gradient across the membrane. The sequence is that of V-type ATP synthase subunit D from Clostridium novyi (strain NT).